Consider the following 75-residue polypeptide: MRLIVVSIMVTLLSGCGSIISRTIPGQGHGNQYYPGVQWDVRDSAWRYVTILDLPFSLVFDTLLLPIDIHHGPYE.

The N-terminal stretch at 1 to 21 (MRLIVVSIMVTLLSGCGSIIS) is a signal peptide.

The protein to E.coli YidQ.

This is an uncharacterized protein from Escherichia coli O157:H7.